The following is an 835-amino-acid chain: Replication origin-binding protein (835 aa).

The Helicase ATP-binding domain maps to 54–215 (PGMSQTRPVT…SGLRGDENIH (162 aa)). 67–74 (APMGSGKT) is an ATP binding site.

It belongs to the herpesviridae OriBP family. In terms of assembly, homodimer. Interacts with the major DNA-binding protein. Interacts with the helicase/primase component 52 and the polymerase accessory protein.

Its subcellular location is the host nucleus. Functionally, functions as a docking protein to recruit essential components of the viral replication machinery to viral DNA origins. In the presence of the major DNA-binding protein, opens dsDNA leading to a conformational change in the origin that facilitates DNA unwinding and subsequent replication. The polypeptide is Replication origin-binding protein (Homo sapiens (Human)).